An 83-amino-acid polypeptide reads, in one-letter code: Mu-theraphotoxin-Hhn2j 3 (83 aa).

The N-terminal stretch at methionine 1 to alanine 21 is a signal peptide. The propeptide occupies serine 22–arginine 48. 3 disulfide bridges follow: cysteine 50/cysteine 65, cysteine 57/cysteine 70, and cysteine 64/cysteine 77. Leucine 81 carries the leucine amide modification.

It belongs to the neurotoxin 10 (Hwtx-1) family. 15 (Hntx-3) subfamily. Monomer. In terms of tissue distribution, expressed by the venom gland.

The protein localises to the secreted. Its function is as follows. Lethal neurotoxin. Selectively blocks tetrodotoxin-sensitive voltage-gated sodium channels (Nav). Does not affect tetrodotoxin-resistant voltage-gated sodium channels or calcium channels. This Cyriopagopus hainanus (Chinese bird spider) protein is Mu-theraphotoxin-Hhn2j 3.